A 393-amino-acid chain; its full sequence is UDP-galactose translocator (393 aa).

A run of 10 helical transmembrane segments spans residues 3–23, 37–57, 65–85, 97–117, 140–160, 169–189, 200–220, 238–258, 269–289, and 315–335; these read AVGS…AGAL, YISL…IRYA, FFAT…CLLL, LVLF…KLAV, TFQV…VLML, WASL…QAGG, GVGL…GVYF, LGLF…GTAV, PAVW…AVVV, and LFGF…IGAV. The segment at 353–393 is disordered; the sequence is APTSGPCTHQQPPGQPPPPQLSSHHGDLSTEPFLPKSVLVK.

It belongs to the nucleotide-sugar transporter family. SLC35A subfamily. Interacts with SLC35A3; the interaction is reduced in the presence of SLC35A4. Found in a complex with SLC35A3 and SLC35A4.

The protein resides in the golgi apparatus membrane. It catalyses the reaction UMP(out) + UDP-alpha-D-galactose(in) = UMP(in) + UDP-alpha-D-galactose(out). It carries out the reaction UDP-N-acetyl-alpha-D-galactosamine(in) + UMP(out) = UDP-N-acetyl-alpha-D-galactosamine(out) + UMP(in). The catalysed reaction is UMP(out) + UDP-alpha-D-glucose(in) = UMP(in) + UDP-alpha-D-glucose(out). The enzyme catalyses UMP(out) + UDP-N-acetyl-alpha-D-glucosamine(in) = UMP(in) + UDP-N-acetyl-alpha-D-glucosamine(out). It catalyses the reaction UDP-alpha-D-galactose(in) + AMP(out) = UDP-alpha-D-galactose(out) + AMP(in). It carries out the reaction UDP-alpha-D-galactose(in) + CMP(out) = UDP-alpha-D-galactose(out) + CMP(in). The catalysed reaction is UDP-N-acetyl-alpha-D-galactosamine(out) + UDP-alpha-D-galactose(in) = UDP-N-acetyl-alpha-D-galactosamine(in) + UDP-alpha-D-galactose(out). The enzyme catalyses UDP-N-acetyl-alpha-D-glucosamine(out) + UDP-alpha-D-galactose(in) = UDP-N-acetyl-alpha-D-glucosamine(in) + UDP-alpha-D-galactose(out). It catalyses the reaction UDP-alpha-D-galactose(in) + UDP-alpha-D-glucose(out) = UDP-alpha-D-galactose(out) + UDP-alpha-D-glucose(in). It carries out the reaction UMP(out) + CMP(in) = UMP(in) + CMP(out). The catalysed reaction is UMP(out) + AMP(in) = UMP(in) + AMP(out). Functionally, transports uridine diphosphate galactose (UDP-galactose) from the cytosol into the Golgi apparatus, functioning as an antiporter that exchanges UDP-galactose for UMP. It is also able to exchange UDP-galactose for AMP and CMP, and to transport UDP-N-acetylgalactosamine (UDP-GalNAc) and other nucleotide sugars. As a provider of UDP-galactose to galactosyltransferases present in the Golgi apparatus, it is necessary for globotriaosylceramide/globoside (Gb3Cer) synthesis from lactosylceramide. The protein is UDP-galactose translocator of Bos taurus (Bovine).